The primary structure comprises 204 residues: N-(5'-phosphoribosyl)anthranilate isomerase (204 aa).

It belongs to the TrpF family.

It carries out the reaction N-(5-phospho-beta-D-ribosyl)anthranilate = 1-(2-carboxyphenylamino)-1-deoxy-D-ribulose 5-phosphate. Its pathway is amino-acid biosynthesis; L-tryptophan biosynthesis; L-tryptophan from chorismate: step 3/5. In Bacillus cereus (strain G9842), this protein is N-(5'-phosphoribosyl)anthranilate isomerase.